The primary structure comprises 355 residues: N6-Methyl-AMP deaminase (355 aa).

Zn(2+)-binding residues include histidine 24 and histidine 26. N(6)-methyl-AMP is bound by residues histidine 26, asparagine 28, histidine 74, 106–109, aspartate 148, and glycine 181; that span reads STPR. Residue histidine 208 coordinates Zn(2+). Positions 211, 293, and 294 each coordinate N(6)-methyl-AMP. Catalysis depends on glutamate 211, which acts as the Proton donor. Position 293 (aspartate 293) interacts with Zn(2+).

Belongs to the metallo-dependent hydrolases superfamily. Adenosine and AMP deaminases family. As to quaternary structure, monomer. Zn(2+) serves as cofactor.

It catalyses the reaction N(6)-methyl-AMP + H2O + H(+) = IMP + methylamine. Its function is as follows. Catalyzes the hydrolysis of the free cytosolic methylated adenosine nucleotide N(6)-methyl-AMP (N6-mAMP) to produce inositol monophosphate (IMP) and methylamine. Is required for the catabolism of cytosolic N6-mAMP, which is derived from the degradation of mRNA containing N6-methylated adenine (m6A). Catalyzes the removal of different alkyl groups not only from N6-substituted purine or 2-aminopurine nucleoside monophosphates but also from O6-substituted compounds in vitro. The protein is N6-Methyl-AMP deaminase of Homo sapiens (Human).